The following is a 481-amino-acid chain: UDP-N-acetylmuramate--L-alanine ligase (481 aa).

115–121 contributes to the ATP binding site; the sequence is GTHGKTT.

It belongs to the MurCDEF family.

It is found in the cytoplasm. It catalyses the reaction UDP-N-acetyl-alpha-D-muramate + L-alanine + ATP = UDP-N-acetyl-alpha-D-muramoyl-L-alanine + ADP + phosphate + H(+). It functions in the pathway cell wall biogenesis; peptidoglycan biosynthesis. In terms of biological role, cell wall formation. The polypeptide is UDP-N-acetylmuramate--L-alanine ligase (Rhodospirillum rubrum (strain ATCC 11170 / ATH 1.1.1 / DSM 467 / LMG 4362 / NCIMB 8255 / S1)).